Here is a 332-residue protein sequence, read N- to C-terminus: Apoptosis-enhancing nuclease (332 aa).

The tract at residues 1-102 (MVPREVPESS…VPREAPSSGP (102 aa)) is disordered. The segment covering 20–36 (ARRRHKRRSRQHQRFMA) has biased composition (basic residues). Positions 21–29 (RRRHKRRSR) match the Nucleolar localization signal motif. The segment covering 63–73 (QTPAGTEASGN) has biased composition (polar residues). The Exonuclease domain occupies 105 to 261 (YVAIDCEMVG…EDAMTAMELY (157 aa)). Residues 160 to 183 (RQHMHKAIPFQVAQKEILKLLKGK) carry the Nuclear localization signal motif. Residues 272-332 (VASTAKAHPE…EGQGARSAPP (61 aa)) are disordered. The segment covering 310 to 321 (GDTREAQDRQEG) has biased composition (basic and acidic residues).

It is found in the nucleus. The protein localises to the nucleolus. Its function is as follows. Exonuclease with activity against single- and double-stranded DNA and RNA. Mediates p53-induced apoptosis. When induced by p53 following DNA damage, digests double-stranded DNA to form single-stranded DNA and amplifies DNA damage signals, leading to enhancement of apoptosis. The chain is Apoptosis-enhancing nuclease from Rattus norvegicus (Rat).